We begin with the raw amino-acid sequence, 184 residues long: Tumor necrosis factor receptor superfamily member 13C (184 aa).

Over Met-1–Leu-78 the chain is Extracellular. A TNFR-Cys; truncated repeat occupies Pro-18–Cys-35. 2 cysteine pairs are disulfide-bonded: Cys-19–Cys-32 and Cys-24–Cys-35. An essential for TNFSF13B/TALL1/BAFF/BLyS binding region spans residues Asp-26 to His-31. The tract at residues Pro-43–Ser-62 is disordered. Residues Phe-79–Val-99 form a helical; Signal-anchor for type III membrane protein membrane-spanning segment. Residues Ser-100–Gln-184 are Cytoplasmic-facing. A disordered region spans residues Arg-107–Gln-184. Residues Asp-118–Asp-128 are compositionally biased toward basic and acidic residues. Polar residues predominate over residues Leu-168–Gln-184.

Highly expressed in spleen and lymph node, and in resting B-cells. Detected at lower levels in activated B-cells, resting CD4+ T-cells, in thymus and peripheral blood leukocytes.

The protein localises to the membrane. In terms of biological role, B-cell receptor specific for TNFSF13B/TALL1/BAFF/BLyS. Promotes the survival of mature B-cells and the B-cell response. The protein is Tumor necrosis factor receptor superfamily member 13C (TNFRSF13C) of Homo sapiens (Human).